The sequence spans 362 residues: Phosphoserine aminotransferase (362 aa).

Arg43 provides a ligand contact to L-glutamate. Pyridoxal 5'-phosphate contacts are provided by residues 77-78 (AR), Trp103, Thr153, Asp173, and Gln196. N6-(pyridoxal phosphate)lysine is present on Lys197.

The protein belongs to the class-V pyridoxal-phosphate-dependent aminotransferase family. SerC subfamily. As to quaternary structure, homodimer. Pyridoxal 5'-phosphate is required as a cofactor.

The protein localises to the cytoplasm. The catalysed reaction is O-phospho-L-serine + 2-oxoglutarate = 3-phosphooxypyruvate + L-glutamate. The enzyme catalyses 4-(phosphooxy)-L-threonine + 2-oxoglutarate = (R)-3-hydroxy-2-oxo-4-phosphooxybutanoate + L-glutamate. The protein operates within amino-acid biosynthesis; L-serine biosynthesis; L-serine from 3-phospho-D-glycerate: step 2/3. Its pathway is cofactor biosynthesis; pyridoxine 5'-phosphate biosynthesis; pyridoxine 5'-phosphate from D-erythrose 4-phosphate: step 3/5. In terms of biological role, catalyzes the reversible conversion of 3-phosphohydroxypyruvate to phosphoserine and of 3-hydroxy-2-oxo-4-phosphonooxybutanoate to phosphohydroxythreonine. The protein is Phosphoserine aminotransferase of Legionella pneumophila (strain Paris).